Reading from the N-terminus, the 440-residue chain is 23S rRNA (uracil(1939)-C(5))-methyltransferase RlmD (440 aa).

The TRAM domain maps to 10-68 (KALPTQAVEITIDNLDHHLTGVGRYQGKACFVEGVLPGEKVSVQITEQKKQYAHARLRQ). [4Fe-4S] cluster is bound by residues Cys-81, Cys-87, Cys-90, and Cys-169. S-adenosyl-L-methionine-binding residues include Gln-272, Phe-301, Asn-306, Glu-322, Asp-349, and Asp-372. Catalysis depends on Cys-398, which acts as the Nucleophile.

This sequence belongs to the class I-like SAM-binding methyltransferase superfamily. RNA M5U methyltransferase family. RlmD subfamily.

It catalyses the reaction uridine(1939) in 23S rRNA + S-adenosyl-L-methionine = 5-methyluridine(1939) in 23S rRNA + S-adenosyl-L-homocysteine + H(+). Catalyzes the formation of 5-methyl-uridine at position 1939 (m5U1939) in 23S rRNA. This is 23S rRNA (uracil(1939)-C(5))-methyltransferase RlmD from Tolumonas auensis (strain DSM 9187 / NBRC 110442 / TA 4).